The primary structure comprises 123 residues: Large ribosomal subunit protein bL19c (123 aa).

It belongs to the bacterial ribosomal protein bL19 family.

The protein resides in the plastid. Its subcellular location is the chloroplast. The chain is Large ribosomal subunit protein bL19c from Pyropia yezoensis (Susabi-nori).